Here is a 283-residue protein sequence, read N- to C-terminus: MNWTGLYTLLSGVNRHSTAIGRVWLSVIFIFRIMVLVVAAESVWGDEKSSFICNTLQPGCNSVCYDHFFPISHVRLWSLQLILVSTPALLVAMHVAHQQHIEKKMLRLEGHGDPLHLEEVKRHKVHISGTLWWTYVISVVFRLLFEAVFMYVFYLLYPGYAMVRLVKCEAFPCPNTVDCFVSRPTEKTVFTVFMLAASGICIILNVAEVVYLIIRACARRAQRRSNPPSRKGSGFGHRLSPEYKQNEINKLLSEQDGSLKDILRRSPGTGAGLAEKSDRCSAC.

The Cytoplasmic segment spans residues 1–22; the sequence is MNWTGLYTLLSGVNRHSTAIGR. A helical transmembrane segment spans residues 23–45; sequence VWLSVIFIFRIMVLVVAAESVWG. Over 46–75 the chain is Extracellular; that stretch reads DEKSSFICNTLQPGCNSVCYDHFFPISHVR. Residues 76-95 traverse the membrane as a helical segment; sequence LWSLQLILVSTPALLVAMHV. Over 96-130 the chain is Cytoplasmic; the sequence is AHQQHIEKKMLRLEGHGDPLHLEEVKRHKVHISGT. The helical transmembrane segment at 131–153 threads the bilayer; that stretch reads LWWTYVISVVFRLLFEAVFMYVF. Residues 154-191 lie on the Extracellular side of the membrane; the sequence is YLLYPGYAMVRLVKCEAFPCPNTVDCFVSRPTEKTVFT. The chain crosses the membrane as a helical span at residues 192-214; it reads VFMLAASGICIILNVAEVVYLII. At 215 to 283 the chain is on the cytoplasmic side; the sequence is RACARRAQRR…AEKSDRCSAC (69 aa). Phosphoserine is present on residues Ser-233, Ser-258, Ser-266, and Ser-277.

It belongs to the connexin family. Beta-type (group I) subfamily. In terms of assembly, a connexon is composed of a hexamer of connexins. Interacts with CNST.

Its subcellular location is the cell membrane. The protein resides in the cell junction. It is found in the gap junction. Functionally, one gap junction consists of a cluster of closely packed pairs of transmembrane channels, the connexons, through which materials of low MW diffuse from one cell to a neighboring cell. This chain is Gap junction beta-1 protein (Gjb1), found in Mus musculus (Mouse).